The chain runs to 78 residues: Short neurotoxin SNTX14 (78 aa).

Positions 1-21 (MKTLLLTFLVVTIVCLDLGYT) are cleaved as a signal peptide. Cystine bridges form between Cys-24/Cys-40, Cys-33/Cys-58, Cys-62/Cys-70, and Cys-71/Cys-76.

The protein belongs to the three-finger toxin family. Short-chain subfamily. Expressed by the venom gland.

It localises to the secreted. Functionally, this three-finger toxin binds and inhibits the nicotinic acetylcholine receptor (nAChR). This chain is Short neurotoxin SNTX14, found in Ophiophagus hannah (King cobra).